A 201-amino-acid polypeptide reads, in one-letter code: 3-isopropylmalate dehydratase small subunit (201 aa).

The protein belongs to the LeuD family. LeuD type 1 subfamily. Heterodimer of LeuC and LeuD.

It carries out the reaction (2R,3S)-3-isopropylmalate = (2S)-2-isopropylmalate. The protein operates within amino-acid biosynthesis; L-leucine biosynthesis; L-leucine from 3-methyl-2-oxobutanoate: step 2/4. Its function is as follows. Catalyzes the isomerization between 2-isopropylmalate and 3-isopropylmalate, via the formation of 2-isopropylmaleate. This Jannaschia sp. (strain CCS1) protein is 3-isopropylmalate dehydratase small subunit.